A 228-amino-acid polypeptide reads, in one-letter code: Putative NAC domain-containing protein 61 (228 aa).

One can recognise an NAC domain in the interval 5–156 (LSVGFRFYPT…KSGSSRAFDR (152 aa)). Disordered stretches follow at residues 77 to 96 (ARGG…ATGS) and 166 to 197 (RNLP…QVDL). Over residues 80 to 89 (GRPSRTTGSG) the composition is skewed to low complexity. Positions 168–193 (LPSNGVETSSRATISTSPETSHSGGN) are enriched in polar residues.

Its subcellular location is the nucleus. The chain is Putative NAC domain-containing protein 61 (NAC061) from Arabidopsis thaliana (Mouse-ear cress).